A 604-amino-acid polypeptide reads, in one-letter code: UvrABC system protein C (604 aa).

The 78-residue stretch at 14–91 (ESPGVYRMLD…IKEQRPPYNI (78 aa)) folds into the GIY-YIG domain. One can recognise a UVR domain in the interval 202-237 (EQVTAQLTRDMETASQALDFEEAARLRDQIQQLRRL). The segment at 538–557 (GHRQQRDKQRRTSTLQDIPG) is disordered.

Belongs to the UvrC family. As to quaternary structure, interacts with UvrB in an incision complex.

It localises to the cytoplasm. In terms of biological role, the UvrABC repair system catalyzes the recognition and processing of DNA lesions. UvrC both incises the 5' and 3' sides of the lesion. The N-terminal half is responsible for the 3' incision and the C-terminal half is responsible for the 5' incision. The sequence is that of UvrABC system protein C from Chromohalobacter salexigens (strain ATCC BAA-138 / DSM 3043 / CIP 106854 / NCIMB 13768 / 1H11).